The following is a 662-amino-acid chain: U6 snRNA-specific terminal uridylyltransferase (662 aa).

Residues Asp-183 and Asp-185 each contribute to the Mg(2+) site. A PAP-associated domain is found at 384-437 (CKFFRELFKYYANFDFTNKAIYGKKAMQKKTLSSAHGGVEESPLMLMDPMDITH).

Belongs to the DNA polymerase type-B-like family. In terms of assembly, forms a complex composed of sart-3, terminal uridylyltransferase usip-1 and U6 snRNA; complex formation is mediated by usip-1 and sart-3 binding to U6 snRNA. It depends on Mg(2+) as a cofactor. The cofactor is Mn(2+). In terms of tissue distribution, ubiquitously expressed.

Its subcellular location is the nucleus. The protein localises to the nucleoplasm. The enzyme catalyses RNA(n) + UTP = RNA(n)-3'-uridine ribonucleotide + diphosphate. Its function is as follows. Acts as a specific terminal uridylyltransferase for U6 snRNA. Responsible for the addition of UTP at the 3' end of U6 snRNA which stabilizes U6 snRNA. Does not have activity towards modified uridine containing 3'-monophosphorylation or 2'-O-methylation. The chain is U6 snRNA-specific terminal uridylyltransferase from Caenorhabditis elegans.